Reading from the N-terminus, the 613-residue chain is Glucose-6-phosphate isomerase 1, chloroplastic (613 aa).

Over residues Met-1–Leu-14 the composition is skewed to low complexity. The interval Met-1–Ser-21 is disordered. A chloroplast-targeting transit peptide spans Met-1–Leu-48. Glu-392 acts as the Proton donor in catalysis. Residues His-421 and Lys-526 contribute to the active site. A Phosphoserine modification is found at Ser-595.

The protein belongs to the GPI family.

Its subcellular location is the plastid. The protein localises to the chloroplast stroma. The catalysed reaction is alpha-D-glucose 6-phosphate = beta-D-fructose 6-phosphate. Its pathway is carbohydrate degradation; glycolysis; D-glyceraldehyde 3-phosphate and glycerone phosphate from D-glucose: step 2/4. The protein operates within carbohydrate biosynthesis; gluconeogenesis. Inhibited by glycerol-3-P (G3P). Functionally, promotes the synthesis of starch in leaves. This chain is Glucose-6-phosphate isomerase 1, chloroplastic (PGI1), found in Arabidopsis thaliana (Mouse-ear cress).